We begin with the raw amino-acid sequence, 207 residues long: ADP-ribose pyrophosphatase (207 aa).

Substrate-binding positions include 37–38 and arginine 64; that span reads RE. One can recognise a Nudix hydrolase domain in the interval 41-172; that stretch reads EHFGAVAIVA…EIVNSIAIAG (132 aa). Alanine 76 contributes to the Mg(2+) binding site. The Nudix box signature appears at 77 to 99; sequence GLLDVAGEPPHLTAARELREEVG. Leucine 78 is a substrate binding site. Mg(2+) is bound by residues glutamate 93 and glutamate 97. Residues 114 to 116 and glutamate 120 each bind substrate; that span reads APG. Residue glutamate 142 coordinates Mg(2+). The active-site Proton acceptor is the glutamate 142.

Belongs to the Nudix hydrolase family. As to quaternary structure, homodimer. The cofactor is Mg(2+). Mn(2+) is required as a cofactor.

It catalyses the reaction ADP-D-ribose + H2O = D-ribose 5-phosphate + AMP + 2 H(+). The enzyme catalyses 8-oxo-dGDP + H2O = 8-oxo-dGMP + phosphate + H(+). It carries out the reaction 8-oxo-GDP + H2O = 8-oxo-GMP + phosphate + H(+). Catalyzes the hydrolysis of ADP-ribose (ADPR) to AMP and ribose-5-phosphate. Can also hydrolyze ADP-mannose and ADP-glucose, with lower efficiency. Has weaker activity with NAD, GDP-sugars and UDP-sugars. Also catalyzes the conversion of 8-oxo-dGDP to 8-oxo-dGMP, and 8-oxo-GDP to 8-oxo-GMP. Functions in concert with MutT1 to detoxify 8-oxo-dGTP to 8-oxo-dGMP and may play an important role in supporting cellular growth under oxidative stress. The catalytic efficiency is much higher for the hydrolysis of ADPR than 8-oxo-dGTP, suggesting a more relevant biological role in hydrolysis of ADPR. The sequence is that of ADP-ribose pyrophosphatase from Mycobacterium tuberculosis (strain ATCC 25618 / H37Rv).